A 461-amino-acid chain; its full sequence is uncharacterized protein (461 aa).

LRR repeat units lie at residues 119 to 140, 141 to 162, and 163 to 184; these read NVKK…EKMS, LLEV…QHCK, and NLKE…EYLK. In terms of domain architecture, LRRCT spans 197-237; that stretch reads NPCVGEGGQEYRRKVIRVLPNLTKLDDKPVTTTDHQEAIED.

This is an uncharacterized protein from Caenorhabditis elegans.